The primary structure comprises 153 residues: UPF0756 membrane protein NT01CX_1209 (153 aa).

A run of 4 helical transmembrane segments spans residues isoleucine 5–alanine 25, glutamate 45–isoleucine 65, isoleucine 83–leucine 103, and isoleucine 113–isoleucine 133.

This sequence belongs to the UPF0756 family.

Its subcellular location is the cell membrane. This chain is UPF0756 membrane protein NT01CX_1209, found in Clostridium novyi (strain NT).